A 158-amino-acid chain; its full sequence is C-type lectin BfL-2 (158 aa).

Positions 1–21 are cleaved as a signal peptide; sequence MGHFTFIGLCLLAMFLSLSGA. 4 disulfides stabilise this stretch: Cys-26/Cys-37, Cys-54/Cys-154, Cys-61/Cys-156, and Cys-129/Cys-146. A C-type lectin domain is found at 33-155; that stretch reads KNGLCYKVFS…CETLHPFICQ (123 aa). The short motif at 119-121 is the Mannose-binding element; the sequence is EPN. The N-linked (GlcNAc...) asparagine glycan is linked to Asn-121. The Ca(2+) site is built by Glu-127, Asn-142, and Asp-143.

The protein belongs to the true venom lectin family. Homodimer; non-covalently linked. Expressed by the venom gland.

It is found in the secreted. In terms of biological role, mannose-binding lectin which recognizes specific carbohydrate structures and agglutinates a variety of animal cells by binding to cell-surface glycoproteins and glycolipids. May be a calcium-dependent lectin. This Bungarus fasciatus (Banded krait) protein is C-type lectin BfL-2.